We begin with the raw amino-acid sequence, 714 residues long: Fatty acid oxidation complex subunit alpha (714 aa).

An enoyl-CoA hydratase region spans residues 1–190 (MEMASAFTLN…KLGLVDDVVP (190 aa)). A 3-hydroxyacyl-CoA dehydrogenase region spans residues 306–714 (APLNSVGILG…FWKTTATDLQ (409 aa)).

In the N-terminal section; belongs to the enoyl-CoA hydratase/isomerase family. This sequence in the central section; belongs to the 3-hydroxyacyl-CoA dehydrogenase family. As to quaternary structure, heterotetramer of two alpha chains (FadJ) and two beta chains (FadI).

It localises to the cytoplasm. It carries out the reaction a (3S)-3-hydroxyacyl-CoA = a (2E)-enoyl-CoA + H2O. It catalyses the reaction a 4-saturated-(3S)-3-hydroxyacyl-CoA = a (3E)-enoyl-CoA + H2O. The enzyme catalyses a (3S)-3-hydroxyacyl-CoA + NAD(+) = a 3-oxoacyl-CoA + NADH + H(+). The catalysed reaction is (3S)-3-hydroxybutanoyl-CoA = (3R)-3-hydroxybutanoyl-CoA. Its pathway is lipid metabolism; fatty acid beta-oxidation. Functionally, catalyzes the formation of a hydroxyacyl-CoA by addition of water on enoyl-CoA. Also exhibits 3-hydroxyacyl-CoA epimerase and 3-hydroxyacyl-CoA dehydrogenase activities. The sequence is that of Fatty acid oxidation complex subunit alpha from Escherichia coli O7:K1 (strain IAI39 / ExPEC).